A 431-amino-acid chain; its full sequence is Isochorismate synthase MenF (431 aa).

The active-site Proton acceptor is Lys190. Glu240 acts as the Proton donor in catalysis. The Mg(2+) site is built by Glu284 and Glu416.

It belongs to the isochorismate synthase family. As to quaternary structure, homodimer. Mg(2+) is required as a cofactor.

The catalysed reaction is chorismate = isochorismate. Its pathway is quinol/quinone metabolism; 1,4-dihydroxy-2-naphthoate biosynthesis; 1,4-dihydroxy-2-naphthoate from chorismate: step 1/7. It participates in quinol/quinone metabolism; menaquinone biosynthesis. Functionally, catalyzes the conversion of chorismate to isochorismate. Can also catalyze the reverse reaction, but with a lower efficiency. In Escherichia coli (strain K12), this protein is Isochorismate synthase MenF.